Here is a 271-residue protein sequence, read N- to C-terminus: MSFSNQNYNVHTFIIMNQSIKFWPEQERPRERLLHSGPESLSDAELLAIFLRTGSKQHSAVELARLMIQHFGGLNPVFDASLQELSHFHGIGTTKYAHLMAVKELGRRYLNHYFHQDALNLNSSRLVLDYLRYELLGEKQEVFAVLCLDSELRKLNFKKLFYGSLNACNISINHTLRYALQQHACHIVIAHNHPFGKAEPSAADLDLTHQLYQACQLVEIKLLDHFIIAKDGTFSFAERALLSQKKCMHTDIDKPDLTGEDHHKKSCDRSP.

Residues 120 to 242 (NLNSSRLVLD…TFSFAERALL (123 aa)) enclose the MPN domain. Zn(2+)-binding residues include H191, H193, and D204. The short motif at 191-204 (HNHPFGKAEPSAAD) is the JAMM motif element.

Belongs to the UPF0758 family.

The protein is UPF0758 protein ACIAD3126 of Acinetobacter baylyi (strain ATCC 33305 / BD413 / ADP1).